Consider the following 261-residue polypeptide: Methyl-coenzyme M reductase subunit gamma (261 aa).

A coenzyme M-binding site is contributed by R123.

Belongs to the methyl-coenzyme M reductase gamma subunit family. In terms of assembly, MCR is a hexamer of two alpha, two beta, and two gamma chains, forming a dimer of heterotrimers. Coenzyme F430 serves as cofactor.

Its subcellular location is the cytoplasm. It carries out the reaction coenzyme B + methyl-coenzyme M = methane + coenzyme M-coenzyme B heterodisulfide. Its pathway is one-carbon metabolism; methyl-coenzyme M reduction; methane from methyl-coenzyme M: step 1/1. In terms of biological role, component of the methyl-coenzyme M reductase (MCR) I that catalyzes the reductive cleavage of methyl-coenzyme M (CoM-S-CH3 or 2-(methylthio)ethanesulfonate) using coenzyme B (CoB or 7-mercaptoheptanoylthreonine phosphate) as reductant which results in the production of methane and the mixed heterodisulfide of CoB and CoM (CoM-S-S-CoB). This is the final step in methanogenesis. The chain is Methyl-coenzyme M reductase subunit gamma (mcrG) from Methanococcus voltae.